A 118-amino-acid polypeptide reads, in one-letter code: uncharacterized protein (118 aa).

A run of 3 helical transmembrane segments spans residues Ile17–Leu37, Ile60–Phe80, and Tyr90–Trp110.

The protein resides in the membrane. This is an uncharacterized protein from Acanthamoeba polyphaga mimivirus (APMV).